We begin with the raw amino-acid sequence, 36 residues long: GPKTKAACKMACKLATCGKKPGGWKCKLCELGCDAV.

3 disulfides stabilise this stretch: C8/C33, C12/C29, and C17/C26. Position 10 is a methionine sulfoxide (M10). V36 carries the valine amide modification.

It localises to the secreted. In terms of biological role, has antimicrobial activity against Gram-positive bacteria (C.glutamicum ATCC 13032 (MIC=0.4 uM), B.subtilis ATCC 23857 (MIC=0.4 uM) and S.aureus ATCC 9144 (MIC=6.3 uM)) and Gram-negative bacteria (E.coli ATCC 25922 (MIC=0.8 uM) and P.aeruginosa ATCC 27853 (MIC=1.6 uM)). This chain is Turgencin-A, found in Synoicum turgens (Colonial ascidian).